Here is a 404-residue protein sequence, read N- to C-terminus: MTALSSVDFCLPEHITPEIFLRDYWQKKPLVIRNGLPEIVGQFEPQDIIELAQNEDVTARLVKTFSDDDWKVFFSPLSEKDFQKLPEKWSVLVQNLEQWSPELGQLWNKFGFIPQWQRDDIMVSYAPKGGSVGKHYDEYDVFLVQGYGHRRWQVGKWCDASTEFKPNQSIRIFDDMGELVIDEVMNPGDILYIPARMAHYGVAEDDCLTFSFGLRYPNLSNLIDGISKGFCHQDPDLNLSEFDLPLRLSQSEQRTGKLADENIQAMKQLLLDKLAHSEAFDTLFKQAVASAVSSRRYELLVSDEMCDPDEVRSILEEDGAFLSQDNNCKLLYTENPLRIYANGEWLDELNIIESEVLKRLSDGESLDWAFLSDLANKTEDPETSMDLLLDSICNWVDDGWALIE.

Positions 102–231 (ELGQLWNKFG…LIDGISKGFC (130 aa)) constitute a JmjC domain. Fe cation contacts are provided by H135, D137, and H199.

Belongs to the ROX family. Requires Fe(2+) as cofactor.

Oxygenase that catalyzes the hydroxylation of a ribosomal protein. The protein is Probable ribosomal oxygenase HI_0396 of Haemophilus influenzae (strain ATCC 51907 / DSM 11121 / KW20 / Rd).